The chain runs to 170 residues: Flavodoxin (170 aa).

Positions 4–165 constitute a Flavodoxin-like domain; it reads IGLFYGTQTG…RIKTWVSQLK (162 aa).

It belongs to the flavodoxin family. The cofactor is FMN.

Low-potential electron donor to a number of redox enzymes. The polypeptide is Flavodoxin (isiB) (Synechococcus elongatus (strain ATCC 33912 / PCC 7942 / FACHB-805) (Anacystis nidulans R2)).